The sequence spans 173 residues: RNA 2',3'-cyclic phosphodiesterase (173 aa).

Histidine 38 serves as the catalytic Proton donor. Short sequence motifs (HXTX) lie at residues 38 to 41 (HITV) and 118 to 121 (HLTI). Catalysis depends on histidine 118, which acts as the Proton acceptor.

It belongs to the 2H phosphoesterase superfamily. ThpR family.

The enzyme catalyses a 3'-end 2',3'-cyclophospho-ribonucleotide-RNA + H2O = a 3'-end 2'-phospho-ribonucleotide-RNA + H(+). Hydrolyzes RNA 2',3'-cyclic phosphodiester to an RNA 2'-phosphomonoester. This chain is RNA 2',3'-cyclic phosphodiesterase, found in Methanocaldococcus jannaschii (strain ATCC 43067 / DSM 2661 / JAL-1 / JCM 10045 / NBRC 100440) (Methanococcus jannaschii).